The sequence spans 641 residues: Bifunctional protein glk (641 aa).

A glucokinase region spans residues 1-340 (MSTGAQTKAA…QLSNRTGGAS (340 aa)). 23-28 (ADVGGT) contributes to the ATP binding site. The 77-residue stretch at 341–417 (SAVFERIRQM…LKLATGLTGT (77 aa)) folds into the HTH rpiR-type domain. The tract at residues 341–641 (SAVFERIRQM…SHGAAPAAKD (301 aa)) is putative HTH-type transcriptional regulator. A DNA-binding region (H-T-H motif) is located at residues 377-396 (IVNIARKADVSQPTVIRFCR). The 140-residue stretch at 461-600 (AIDILNNARR…AVGVAIRRAA (140 aa)) folds into the SIS domain. Residues 576–596 (SMISRILHLVMIDILAVGVAI) form a helical membrane-spanning segment.

It in the N-terminal section; belongs to the bacterial glucokinase family.

Its subcellular location is the membrane. The catalysed reaction is D-glucose + ATP = D-glucose 6-phosphate + ADP + H(+). In Burkholderia mallei (strain ATCC 23344), this protein is Bifunctional protein glk (glk).